We begin with the raw amino-acid sequence, 342 residues long: Anthranilate phosphoribosyltransferase (342 aa).

5-phospho-alpha-D-ribose 1-diphosphate contacts are provided by residues G83, G86–D87, T91, N93–T96, K111–G119, and S123. An anthranilate-binding site is contributed by G83. A Mg(2+)-binding site is contributed by S95. Anthranilate is bound at residue N114. R169 serves as a coordination point for anthranilate. Positions 228 and 229 each coordinate Mg(2+).

It belongs to the anthranilate phosphoribosyltransferase family. As to quaternary structure, homodimer. The cofactor is Mg(2+).

It catalyses the reaction N-(5-phospho-beta-D-ribosyl)anthranilate + diphosphate = 5-phospho-alpha-D-ribose 1-diphosphate + anthranilate. Its pathway is amino-acid biosynthesis; L-tryptophan biosynthesis; L-tryptophan from chorismate: step 2/5. Functionally, catalyzes the transfer of the phosphoribosyl group of 5-phosphorylribose-1-pyrophosphate (PRPP) to anthranilate to yield N-(5'-phosphoribosyl)-anthranilate (PRA). The protein is Anthranilate phosphoribosyltransferase of Halorhodospira halophila (strain DSM 244 / SL1) (Ectothiorhodospira halophila (strain DSM 244 / SL1)).